Reading from the N-terminus, the 305-residue chain is Ribosomal RNA small subunit methyltransferase H (305 aa).

S-adenosyl-L-methionine contacts are provided by residues 30 to 32 (GGH), Asp49, Phe74, Asp96, and Gln103.

Belongs to the methyltransferase superfamily. RsmH family.

The protein localises to the cytoplasm. The catalysed reaction is cytidine(1402) in 16S rRNA + S-adenosyl-L-methionine = N(4)-methylcytidine(1402) in 16S rRNA + S-adenosyl-L-homocysteine + H(+). Functionally, specifically methylates the N4 position of cytidine in position 1402 (C1402) of 16S rRNA. The polypeptide is Ribosomal RNA small subunit methyltransferase H (Francisella tularensis subsp. holarctica (strain LVS)).